We begin with the raw amino-acid sequence, 387 residues long: O-methyltransferase fsr2 (387 aa).

Position 231 (Asp231) interacts with S-adenosyl-L-methionine. His280 acts as the Proton acceptor in catalysis.

Belongs to the class I-like SAM-binding methyltransferase superfamily. Cation-independent O-methyltransferase family. COMT subfamily.

It functions in the pathway polyketide biosynthesis. Its function is as follows. O-methyltransferase; part of the gene cluster that mediates the biosynthesis of fusarubins, highly pigmented naphthoquinones responsible for the coloration of the fruiting bodies. The non-reducing polyketide synthase FSR1 is responsible for the condensation of seven acetyl-CoA units to yield a haptaketide. After rings A and B are formed by aldol-type cyclization, the PKS-derived product is released as 6-O-demethylfusarubinaldehyde. Then, two hydroxyl groups at C-5 and C-10 are incorporated by FSR3, and simultaneously hydroxyl groups at C-6 and C-8 are methylated by FSR2. The aldehyde is, on the one hand, reduced by FSR3 to 8-O-methylfusarubin alcohol, which equilibrates mainly with 8-O-methylfusarubin and only small amounts of 8-O-methylnectriafurone. On the other hand, the aldehyde can be oxidized to form 8-O-methylfusarubinic acid, a reaction driven by FSR3 equilibrating with 8-O-methylfusarubinlactone, finally resulting in 8-O-methylanhydrofusarubinlactol after a further reduction step and loss of water. 8-O-Methylfusarubinic acid can also undergo decarboxylation, resulting in 8-O-methyl-13-hydroxynorjavanicin after another hydroxylation step at C-13. Both steps are most likely also accomplished by FSR3. No enzymatic function has been determined so far for either FSR4 and FSR5. Their deletion does not alter the product spectrum, but the possibility that they catalyze specific enzymatic steps during perithecium development cannot be ruled out. FSR4 might possess a regulatory function in the biosynthesis of fusarubins. The polypeptide is O-methyltransferase fsr2 (Gibberella fujikuroi (strain CBS 195.34 / IMI 58289 / NRRL A-6831) (Bakanae and foot rot disease fungus)).